A 217-amino-acid chain; its full sequence is Adenylate kinase (217 aa).

An ATP-binding site is contributed by 10-15 (GAGKGT). The interval 30-59 (STGDMLRAQVKAGTALGLEAKKHMDAGGLV) is NMP. AMP contacts are provided by residues Thr31, Arg36, 57–59 (GLV), 85–88 (GFPR), and Gln92. Residues 122 to 159 (GRRAHLASGRTYHVKFNPPKVEGIDDVTGEPLVQRDDD) are LID. ATP is bound by residues Arg123 and 132-133 (TY). 2 residues coordinate AMP: Arg156 and Arg167. Gly203 is a binding site for ATP.

The protein belongs to the adenylate kinase family. Monomer.

The protein localises to the cytoplasm. It carries out the reaction AMP + ATP = 2 ADP. The protein operates within purine metabolism; AMP biosynthesis via salvage pathway; AMP from ADP: step 1/1. Its function is as follows. Catalyzes the reversible transfer of the terminal phosphate group between ATP and AMP. Plays an important role in cellular energy homeostasis and in adenine nucleotide metabolism. This chain is Adenylate kinase, found in Dechloromonas aromatica (strain RCB).